We begin with the raw amino-acid sequence, 397 residues long: Odorant receptor 85a (397 aa).

At 1–46 the chain is on the cytoplasmic side; it reads MIFKYIQEPVLGSLFRSRDSLIYLNRSIDQMGWRLPPRTKPYWWLY. A helical transmembrane segment spans residues 47–67; that stretch reads YIWTLVVIVLVFIFIPYGLIM. Over 68 to 83 the chain is Extracellular; the sequence is TGIKEFKNFTTTDLFT. An N-linked (GlcNAc...) asparagine glycan is attached at Asn-75. Residues 84-104 traverse the membrane as a helical segment; that stretch reads YVQVPVNTNASIMKGIIVLFM. Over 105–142 the chain is Cytoplasmic; it reads RRRFSRAQKMMDAMDIRCTKMEEKVQVHRAAALCNRVV. Residues 143–163 traverse the membrane as a helical segment; the sequence is VIYHCIYFGYLSMALTGALVI. Residues 164–192 lie on the Extracellular side of the membrane; that stretch reads GKTPFCLYNPLVNPDDHFYLATAIESVTM. Residues 193–213 form a helical membrane-spanning segment; the sequence is AGIILANLILDVYPIIYVVVL. The Cytoplasmic portion of the chain corresponds to 214–262; the sequence is RIHMELLSERIKTLRTDVEKGDDQHYAELVECVKDHKLIVEYGNTLRPM. The helical transmembrane segment at 263-283 threads the bilayer; sequence ISATMFIQLLSVGLLLGLAAV. Residues 284 to 294 lie on the Extracellular side of the membrane; it reads SMQFYNTVMER. Residues 295 to 315 form a helical membrane-spanning segment; sequence VVSGVYTIAILSQTFPFCYVC. Residues 316–347 lie on the Cytoplasmic side of the membrane; the sequence is EQLSSDCESLTNTLFHSKWIGAERRYRTTMLY. Residues 348-368 traverse the membrane as a helical segment; sequence FIHNVQQSILFTAGGIFPICL. Topologically, residues 369-397 are extracellular; it reads NTNIKMAKFAFSVVTIVNEMDLAEKLRRE.

The protein belongs to the insect chemoreceptor superfamily. Heteromeric odorant receptor channel (TC 1.A.69) family. Or2a subfamily. As to quaternary structure, interacts with Orco. Complexes exist early in the endomembrane system in olfactory sensory neurons (OSNs), coupling these complexes to the conserved ciliary trafficking pathway. As to expression, expressed in olfactory sensory neurons in the antenna.

The protein resides in the cell membrane. In terms of biological role, odorant receptor which mediates acceptance or avoidance behavior, depending on its substrates. The odorant receptor repertoire encodes a large collection of odor stimuli that vary widely in identity, intensity, and duration. May form a complex with Orco to form odorant-sensing units, providing sensitive and prolonged odorant signaling and calcium permeability. The polypeptide is Odorant receptor 85a (Or85a) (Drosophila melanogaster (Fruit fly)).